Here is a 497-residue protein sequence, read N- to C-terminus: B3 domain-containing protein REM1 (497 aa).

3 DNA-binding regions (TF-B3) span residues 7–92 (PSLF…SSES), 142–239 (FLRA…LCSH), and 278–379 (FLTQ…HSKI). The tract at residues 87–135 (AVSSESDDDESDDTDDSESDDESNDTDDSESDDSEDNGEGDSSLVNKEA) is disordered. The segment covering 91–125 (ESDDDESDDTDDSESDDESNDTDDSESDDSEDNGE) has biased composition (acidic residues).

As to expression, specifically expressed in the reproductive meristem.

Its subcellular location is the nucleus. May play a role in flower development. In Brassica oleracea var. botrytis (Cauliflower), this protein is B3 domain-containing protein REM1 (REM1).